Reading from the N-terminus, the 834-residue chain is WPP domain-associated protein (834 aa).

Coiled-coil stretches lie at residues 410–456, 574–700, and 792–812; these read SFGN…RLQH, SLDT…VLAI, and AEAEVDLLGDEVDTLLSLVEK.

As to quaternary structure, interacts with MAF1. As to expression, expressed in seedlings, leaves and fruits.

The protein localises to the golgi apparatus. The protein resides in the cytoplasm. The sequence is that of WPP domain-associated protein (WAP) from Solanum lycopersicum (Tomato).